A 680-amino-acid chain; its full sequence is Lipase 1 (680 aa).

The first 34 residues, 1-34 (MKSQNKYSIRKFSVGASSILIATLLFLSGGQAQA), serve as a signal peptide directing secretion. The propeptide occupies 35–290 (AEKQVNMGNS…AKAKDDQTNK (256 aa)). Positions 82–259 (KNLHNDKTIS…PTKDNDKKNG (178 aa)) are disordered. The segment covering 84 to 111 (LHNDKTISEENHRKTDDLNKDQLKDDKN) has biased composition (basic and acidic residues). Polar residues-rich tracts occupy residues 125–138 (KNNN…NQGL), 162–193 (SQDS…SQRE), and 204–223 (QPQQ…FNNE). A compositionally biased stretch (basic and acidic residues) spans 224-234 (QEVKPQKDEKT). The segment covering 235–246 (LSVSDLKNNQKS) has biased composition (polar residues). S408 serves as the catalytic Nucleophile. D600 serves as the catalytic Charge relay system. D638 provides a ligand contact to Ca(2+). H639 (charge relay system) is an active-site residue. Residues D641, D646, and D649 each contribute to the Ca(2+) site.

It belongs to the AB hydrolase superfamily. Lipase family.

Its subcellular location is the secreted. The catalysed reaction is a triacylglycerol + H2O = a diacylglycerol + a fatty acid + H(+). The sequence is that of Lipase 1 (lip1) from Staphylococcus aureus (strain Mu50 / ATCC 700699).